The chain runs to 239 residues: BURP domain-containing protein 6 (239 aa).

Positions 1–19 (MPGAIRDLINPVSSAASAS) are cleaved as a signal peptide. One can recognise a BURP domain in the interval 28–239 (FFLEKDLFPG…PQDDMLWVRN (212 aa)).

Expressed in leaves and shoot.

In Oryza sativa subsp. japonica (Rice), this protein is BURP domain-containing protein 6 (BURP6).